Consider the following 131-residue polypeptide: Small ribosomal subunit protein uS8 (131 aa).

This sequence belongs to the universal ribosomal protein uS8 family. As to quaternary structure, part of the 30S ribosomal subunit. Contacts proteins S5 and S12.

Functionally, one of the primary rRNA binding proteins, it binds directly to 16S rRNA central domain where it helps coordinate assembly of the platform of the 30S subunit. The chain is Small ribosomal subunit protein uS8 from Acinetobacter baumannii (strain AB307-0294).